We begin with the raw amino-acid sequence, 185 residues long: uncharacterized protein (185 aa).

The protein to M.thermoautotrophicum MTH236.

This is an uncharacterized protein from Methanocaldococcus jannaschii (strain ATCC 43067 / DSM 2661 / JAL-1 / JCM 10045 / NBRC 100440) (Methanococcus jannaschii).